We begin with the raw amino-acid sequence, 344 residues long: Sensor histidine kinase GraS (344 aa).

The next 2 membrane-spanning stretches (helical) occupy residues 18–38 (IFWI…DYDI) and 43–63 (IGFI…FTFL). The Histidine kinase domain maps to 126–332 (EFVHDIKTPV…TFVLTFPKQN (207 aa)). The residue at position 129 (H129) is a Phosphohistidine; by autocatalysis.

Autophosphorylated.

The protein localises to the cell membrane. The catalysed reaction is ATP + protein L-histidine = ADP + protein N-phospho-L-histidine.. Its function is as follows. Member of the two-component regulatory system GraR/GraS involved in resistance against cationic antimicrobial peptides (CAMPs). GraS probably functions as a sensor protein kinase which is autophosphorylated at a histidine residue and transfers its phosphate group to GraR. The polypeptide is Sensor histidine kinase GraS (graS) (Staphylococcus haemolyticus (strain JCSC1435)).